We begin with the raw amino-acid sequence, 138 residues long: Basic phospholipase A2 PL-X' (138 aa).

Residues 1 to 16 (MRTLWIMAVLLVGVEG) form the signal peptide. Disulfide bonds link cysteine 42-cysteine 131, cysteine 44-cysteine 60, cysteine 59-cysteine 111, cysteine 65-cysteine 138, cysteine 66-cysteine 104, cysteine 73-cysteine 97, and cysteine 91-cysteine 102. Positions 43, 45, and 47 each coordinate Ca(2+). Histidine 63 is a catalytic residue. Aspartate 64 lines the Ca(2+) pocket. Residue aspartate 105 is part of the active site.

The protein belongs to the phospholipase A2 family. Group II subfamily. D49 sub-subfamily. Ca(2+) serves as cofactor. Expressed by the venom gland.

Its subcellular location is the secreted. The catalysed reaction is a 1,2-diacyl-sn-glycero-3-phosphocholine + H2O = a 1-acyl-sn-glycero-3-phosphocholine + a fatty acid + H(+). In terms of biological role, PLA2 catalyzes the calcium-dependent hydrolysis of the 2-acyl groups in 3-sn-phosphoglycerides. This chain is Basic phospholipase A2 PL-X', found in Protobothrops flavoviridis (Habu).